Reading from the N-terminus, the 617-residue chain is Chaperone protein DnaK (617 aa).

The residue at position 175 (T175) is a Phosphothreonine; by autocatalysis. A compositionally biased stretch (low complexity) spans A578 to A592. The tract at residues A578–K617 is disordered. The segment covering G600–K617 has biased composition (basic and acidic residues).

The protein belongs to the heat shock protein 70 family.

In terms of biological role, acts as a chaperone. The protein is Chaperone protein DnaK of Clostridium novyi (strain NT).